A 1187-amino-acid polypeptide reads, in one-letter code: DNA-directed RNA polymerase subunit beta (1187 aa).

Belongs to the RNA polymerase beta chain family. The RNAP catalytic core consists of 2 alpha, 1 beta, 1 beta' and 1 omega subunit. When a sigma factor is associated with the core the holoenzyme is formed, which can initiate transcription.

The enzyme catalyses RNA(n) + a ribonucleoside 5'-triphosphate = RNA(n+1) + diphosphate. Its function is as follows. DNA-dependent RNA polymerase catalyzes the transcription of DNA into RNA using the four ribonucleoside triphosphates as substrates. The polypeptide is DNA-directed RNA polymerase subunit beta (Petrotoga mobilis (strain DSM 10674 / SJ95)).